Here is a 218-residue protein sequence, read N- to C-terminus: uncharacterized protein (218 aa).

In terms of domain architecture, Response regulatory spans 7–123 (RVALADDQPL…ELIDAIRAAA (117 aa)). Asp58 carries the 4-aspartylphosphate modification. Residues 150–215 (AEELAEPFTK…QAVVFAIRNG (66 aa)) form the HTH luxR-type domain. Positions 174-193 (NEDIAEKLFVSESTVKTHVH) form a DNA-binding region, H-T-H motif.

Post-translationally, phosphorylated by YxjM.

It localises to the cytoplasm. Probable member of the two-component regulatory system YxjM/YxjL. This is an uncharacterized protein from Bacillus subtilis (strain 168).